Here is a 253-residue protein sequence, read N- to C-terminus: Ribosomal RNA small subunit methyltransferase J (253 aa).

S-adenosyl-L-methionine-binding positions include 101-102 (RD), 117-118 (ER), and Asp-169.

It belongs to the methyltransferase superfamily. RsmJ family.

It localises to the cytoplasm. The enzyme catalyses guanosine(1516) in 16S rRNA + S-adenosyl-L-methionine = N(2)-methylguanosine(1516) in 16S rRNA + S-adenosyl-L-homocysteine + H(+). Functionally, specifically methylates the guanosine in position 1516 of 16S rRNA. This is Ribosomal RNA small subunit methyltransferase J from Psychromonas ingrahamii (strain DSM 17664 / CCUG 51855 / 37).